A 192-amino-acid polypeptide reads, in one-letter code: Nucleoside triphosphate pyrophosphatase (192 aa).

Aspartate 73 functions as the Proton acceptor in the catalytic mechanism.

Belongs to the Maf family. A divalent metal cation is required as a cofactor.

Its subcellular location is the cytoplasm. It carries out the reaction a ribonucleoside 5'-triphosphate + H2O = a ribonucleoside 5'-phosphate + diphosphate + H(+). The enzyme catalyses a 2'-deoxyribonucleoside 5'-triphosphate + H2O = a 2'-deoxyribonucleoside 5'-phosphate + diphosphate + H(+). Its function is as follows. Nucleoside triphosphate pyrophosphatase. May have a dual role in cell division arrest and in preventing the incorporation of modified nucleotides into cellular nucleic acids. This chain is Nucleoside triphosphate pyrophosphatase, found in Ehrlichia chaffeensis (strain ATCC CRL-10679 / Arkansas).